A 167-amino-acid polypeptide reads, in one-letter code: Phosphopantetheine adenylyltransferase (167 aa).

Ser-8 is a binding site for substrate. ATP-binding positions include 8–9 and His-16; that span reads SF. Lys-40, Leu-74, and Arg-88 together coordinate substrate. Residues 89 to 91, Glu-99, and 123 to 129 contribute to the ATP site; these read GLR and WSFVSSS.

The protein belongs to the bacterial CoaD family. Homohexamer. It depends on Mg(2+) as a cofactor.

It localises to the cytoplasm. It catalyses the reaction (R)-4'-phosphopantetheine + ATP + H(+) = 3'-dephospho-CoA + diphosphate. It functions in the pathway cofactor biosynthesis; coenzyme A biosynthesis; CoA from (R)-pantothenate: step 4/5. Functionally, reversibly transfers an adenylyl group from ATP to 4'-phosphopantetheine, yielding dephospho-CoA (dPCoA) and pyrophosphate. This Deinococcus radiodurans (strain ATCC 13939 / DSM 20539 / JCM 16871 / CCUG 27074 / LMG 4051 / NBRC 15346 / NCIMB 9279 / VKM B-1422 / R1) protein is Phosphopantetheine adenylyltransferase.